The chain runs to 618 residues: 1-deoxy-D-xylulose-5-phosphate synthase (618 aa).

Thiamine diphosphate contacts are provided by residues His-75 and 116–118 (GHS). Asp-147 contributes to the Mg(2+) binding site. Thiamine diphosphate-binding positions include 148–149 (GA), Asn-176, Tyr-283, and Glu-364. Residue Asn-176 coordinates Mg(2+).

The protein belongs to the transketolase family. DXPS subfamily. Homodimer. Mg(2+) serves as cofactor. The cofactor is thiamine diphosphate.

It carries out the reaction D-glyceraldehyde 3-phosphate + pyruvate + H(+) = 1-deoxy-D-xylulose 5-phosphate + CO2. It participates in metabolic intermediate biosynthesis; 1-deoxy-D-xylulose 5-phosphate biosynthesis; 1-deoxy-D-xylulose 5-phosphate from D-glyceraldehyde 3-phosphate and pyruvate: step 1/1. In terms of biological role, catalyzes the acyloin condensation reaction between C atoms 2 and 3 of pyruvate and glyceraldehyde 3-phosphate to yield 1-deoxy-D-xylulose-5-phosphate (DXP). In Thiobacillus denitrificans (strain ATCC 25259 / T1), this protein is 1-deoxy-D-xylulose-5-phosphate synthase.